Consider the following 252-residue polypeptide: 3-deoxy-manno-octulosonate cytidylyltransferase (252 aa).

It belongs to the KdsB family.

The protein resides in the cytoplasm. It catalyses the reaction 3-deoxy-alpha-D-manno-oct-2-ulosonate + CTP = CMP-3-deoxy-beta-D-manno-octulosonate + diphosphate. It participates in nucleotide-sugar biosynthesis; CMP-3-deoxy-D-manno-octulosonate biosynthesis; CMP-3-deoxy-D-manno-octulosonate from 3-deoxy-D-manno-octulosonate and CTP: step 1/1. Its pathway is bacterial outer membrane biogenesis; lipopolysaccharide biosynthesis. Its function is as follows. Activates KDO (a required 8-carbon sugar) for incorporation into bacterial lipopolysaccharide in Gram-negative bacteria. The chain is 3-deoxy-manno-octulosonate cytidylyltransferase from Nitratidesulfovibrio vulgaris (strain ATCC 29579 / DSM 644 / CCUG 34227 / NCIMB 8303 / VKM B-1760 / Hildenborough) (Desulfovibrio vulgaris).